The sequence spans 591 residues: Polyphenol oxidase D, chloroplastic (591 aa).

Residues 1 to 83 (MASLCSNSST…ANAIPLAASA (83 aa)) constitute a chloroplast transit peptide. 2 disulfide bridges follow: cysteine 94–cysteine 110 and cysteine 109–cysteine 177. Cu cation contacts are provided by histidine 176, histidine 194, histidine 203, histidine 324, histidine 328, and histidine 366. The 2'-(S-cysteinyl)-histidine (Cys-His) cross-link spans 180–194 (CNGAYRIGGKELQVH).

Belongs to the tyrosinase family. The cofactor is Cu(2+).

Its subcellular location is the plastid. The protein localises to the chloroplast thylakoid lumen. It carries out the reaction 2 catechol + O2 = 2 1,2-benzoquinone + 2 H2O. In terms of biological role, catalyzes the oxidation of mono- and o-diphenols to o-diquinones. This chain is Polyphenol oxidase D, chloroplastic, found in Solanum lycopersicum (Tomato).